The sequence spans 129 residues: Follitropin subunit beta (129 aa).

Positions 1–18 (MKSVQFCFLFCCWKAICC) are cleaved as a signal peptide. 6 cysteine pairs are disulfide-bonded: C21/C69, C35/C84, C38/C122, C46/C100, C50/C102, and C105/C112. N-linked (GlcNAc...) asparagine glycans are attached at residues N25 and N42.

Belongs to the glycoprotein hormones subunit beta family. As to quaternary structure, heterodimer. The active follitropin is a heterodimer composed of an alpha chain/CGA shared with other hormones and a unique beta chain/FSHB shown here.

The protein localises to the secreted. Together with the alpha chain CGA constitutes follitropin, the follicle-stimulating hormone, and provides its biological specificity to the hormone heterodimer. Binds FSHR, a G protein-coupled receptor, on target cells to activate downstream signaling pathways. Follitropin is involved in follicle development and spermatogenesis in reproductive organs. This is Follitropin subunit beta (FSHB) from Oryctolagus cuniculus (Rabbit).